The chain runs to 305 residues: UDP-3-O-acyl-N-acetylglucosamine deacetylase (305 aa).

Zn(2+) is bound by residues His78, His237, and Asp241. The Proton donor role is filled by His264.

Belongs to the LpxC family. Zn(2+) serves as cofactor.

It catalyses the reaction a UDP-3-O-[(3R)-3-hydroxyacyl]-N-acetyl-alpha-D-glucosamine + H2O = a UDP-3-O-[(3R)-3-hydroxyacyl]-alpha-D-glucosamine + acetate. Its pathway is glycolipid biosynthesis; lipid IV(A) biosynthesis; lipid IV(A) from (3R)-3-hydroxytetradecanoyl-[acyl-carrier-protein] and UDP-N-acetyl-alpha-D-glucosamine: step 2/6. Functionally, catalyzes the hydrolysis of UDP-3-O-myristoyl-N-acetylglucosamine to form UDP-3-O-myristoylglucosamine and acetate, the committed step in lipid A biosynthesis. In Cupriavidus pinatubonensis (strain JMP 134 / LMG 1197) (Cupriavidus necator (strain JMP 134)), this protein is UDP-3-O-acyl-N-acetylglucosamine deacetylase.